The chain runs to 409 residues: Histidinol dehydrogenase homolog (409 aa).

This sequence belongs to the histidinol dehydrogenase family.

This chain is Histidinol dehydrogenase homolog, found in Synechocystis sp. (strain ATCC 27184 / PCC 6803 / Kazusa).